Reading from the N-terminus, the 122-residue chain is Anti-sigma-F factor antagonist RsfB (122 aa).

The STAS domain occupies 7–115; it reads ITVTVADHNG…STLHDALTGV (109 aa). A Phosphoserine modification is found at S61.

Belongs to the anti-sigma-factor antagonist family. As to quaternary structure, interacts with anti-sigma-F factor RsbW (UsfX). Its phosphorylation may prevent this interaction. In terms of processing, putative phosphorylation on Ser-61 may prevent interaction with RsbW.

Functionally, positive regulator of sigma-F (SigF) activity. Binds to anti-sigma-F factor RsbW (UsfX) preventing its binding to SigF, thus activating transcription. The chain is Anti-sigma-F factor antagonist RsfB (rsfB) from Mycobacterium tuberculosis (strain CDC 1551 / Oshkosh).